We begin with the raw amino-acid sequence, 141 residues long: Putative nickel-responsive regulator (141 aa).

Ni(2+) contacts are provided by His-80, His-91, His-93, and Cys-99.

Belongs to the transcriptional regulatory CopG/NikR family. Ni(2+) serves as cofactor.

Transcriptional regulator. The protein is Putative nickel-responsive regulator of Methanococcus maripaludis (strain C6 / ATCC BAA-1332).